The chain runs to 311 residues: Acetyl-coenzyme A carboxylase carboxyl transferase subunit alpha (311 aa).

The CoA carboxyltransferase C-terminal domain occupies 36-286; the sequence is NLEKETQKVY…SDYVLKAIEE (251 aa).

Belongs to the AccA family. As to quaternary structure, acetyl-CoA carboxylase is a heterohexamer composed of biotin carboxyl carrier protein (AccB), biotin carboxylase (AccC) and two subunits each of ACCase subunit alpha (AccA) and ACCase subunit beta (AccD).

It localises to the cytoplasm. The catalysed reaction is N(6)-carboxybiotinyl-L-lysyl-[protein] + acetyl-CoA = N(6)-biotinyl-L-lysyl-[protein] + malonyl-CoA. Its pathway is lipid metabolism; malonyl-CoA biosynthesis; malonyl-CoA from acetyl-CoA: step 1/1. Component of the acetyl coenzyme A carboxylase (ACC) complex. First, biotin carboxylase catalyzes the carboxylation of biotin on its carrier protein (BCCP) and then the CO(2) group is transferred by the carboxyltransferase to acetyl-CoA to form malonyl-CoA. The polypeptide is Acetyl-coenzyme A carboxylase carboxyl transferase subunit alpha (Campylobacter lari (strain RM2100 / D67 / ATCC BAA-1060)).